The sequence spans 217 residues: Large ribosomal subunit protein uL1A (217 aa).

Ser2 carries the post-translational modification N-acetylserine. Residue Lys47 is modified to N6-methyllysine; by RKM5. 2 positions are modified to phosphoserine: Ser79 and Ser86.

This sequence belongs to the universal ribosomal protein uL1 family. As to quaternary structure, component of the large ribosomal subunit (LSU). Mature yeast ribosomes consist of a small (40S) and a large (60S) subunit. The 40S small subunit contains 1 molecule of ribosomal RNA (18S rRNA) and 33 different proteins (encoded by 57 genes). The large 60S subunit contains 3 rRNA molecules (25S, 5.8S and 5S rRNA) and 46 different proteins (encoded by 81 genes). uL1 forms part of the L1 stalk. In terms of processing, N-terminally acetylated by acetyltransferase NatA.

The protein localises to the cytoplasm. Component of the ribosome, a large ribonucleoprotein complex responsible for the synthesis of proteins in the cell. The small ribosomal subunit (SSU) binds messenger RNAs (mRNAs) and translates the encoded message by selecting cognate aminoacyl-transfer RNA (tRNA) molecules. The large subunit (LSU) contains the ribosomal catalytic site termed the peptidyl transferase center (PTC), which catalyzes the formation of peptide bonds, thereby polymerizing the amino acids delivered by tRNAs into a polypeptide chain. The nascent polypeptides leave the ribosome through a tunnel in the LSU and interact with protein factors that function in enzymatic processing, targeting, and the membrane insertion of nascent chains at the exit of the ribosomal tunnel. uL1 forms part of the L1 stalk, a mobile element that plays a role in evacuating the exit-site tRNA. This chain is Large ribosomal subunit protein uL1A, found in Saccharomyces cerevisiae (strain ATCC 204508 / S288c) (Baker's yeast).